We begin with the raw amino-acid sequence, 262 residues long: Hydroxyethylthiazole kinase (262 aa).

Met43 is a binding site for substrate. Positions 118 and 164 each coordinate ATP. Substrate is bound at residue Ala191.

It belongs to the Thz kinase family. It depends on Mg(2+) as a cofactor.

It catalyses the reaction 5-(2-hydroxyethyl)-4-methylthiazole + ATP = 4-methyl-5-(2-phosphooxyethyl)-thiazole + ADP + H(+). It functions in the pathway cofactor biosynthesis; thiamine diphosphate biosynthesis; 4-methyl-5-(2-phosphoethyl)-thiazole from 5-(2-hydroxyethyl)-4-methylthiazole: step 1/1. Its function is as follows. Catalyzes the phosphorylation of the hydroxyl group of 4-methyl-5-beta-hydroxyethylthiazole (THZ). This Cereibacter sphaeroides (strain KD131 / KCTC 12085) (Rhodobacter sphaeroides) protein is Hydroxyethylthiazole kinase.